The chain runs to 543 residues: Phenylalanine--tRNA ligase beta subunit (543 aa).

Residues 269–344 (FDFRIMRPAR…KSKGIENIEE (76 aa)) enclose the B5 domain. 4 residues coordinate Mg(2+): aspartate 322, aspartate 328, glutamate 331, and aspartate 332.

It belongs to the phenylalanyl-tRNA synthetase beta subunit family. Type 2 subfamily. Tetramer of two alpha and two beta subunits. It depends on Mg(2+) as a cofactor.

Its subcellular location is the cytoplasm. The enzyme catalyses tRNA(Phe) + L-phenylalanine + ATP = L-phenylalanyl-tRNA(Phe) + AMP + diphosphate + H(+). This Thermoplasma acidophilum (strain ATCC 25905 / DSM 1728 / JCM 9062 / NBRC 15155 / AMRC-C165) protein is Phenylalanine--tRNA ligase beta subunit.